The sequence spans 556 residues: Energy-dependent translational throttle protein EttA (556 aa).

ABC transporter domains are found at residues 7-260 and 325-551; these read YTMH…EQEQ and IEVQ…RIKY. 40–47 contributes to the ATP binding site; it reads GLNGAGKS. The tract at residues 96–140 is arm; sequence SEVKNALTRLDEVYALYADPDADFDKLAAEQANLEAIIQAHDGHN. A ptIM region spans residues 243 to 323; sequence GNYSSWLEQK…IPPGPRLGDK (81 aa). 357–364 serves as a coordination point for ATP; that stretch reads GANGAGKS.

It belongs to the ABC transporter superfamily. ABCF family. Translational throttle EttA subfamily. As to quaternary structure, monomer. Probably contacts ribosomal proteins L1, L5, L33 and S7, the 16S and 23S rRNA and the P-site containing tRNA(fMet).

The protein localises to the cytoplasm. It carries out the reaction ATP + H2O = ADP + phosphate + H(+). A translation factor that gates the progression of the 70S ribosomal initiation complex (IC, containing tRNA(fMet) in the P-site) into the translation elongation cycle by using a mechanism sensitive to the ATP/ADP ratio. Binds to the 70S ribosome E-site where it modulates the state of the translating ribosome during subunit translocation. ATP hydrolysis probably frees it from the ribosome, which can enter the elongation phase. The chain is Energy-dependent translational throttle protein EttA from Haemophilus influenzae (strain ATCC 51907 / DSM 11121 / KW20 / Rd).